Reading from the N-terminus, the 134-residue chain is MEMLLGTDIIEVDRIKRAIENGGRKFSEKVFTLNEIEYCESRKAGKYQSYAARFAAKEAVSKAFGTGIGKNAAFSEIEILKDSLGKPYVRLSGKAKEFYDSLGTAGISVSLSHCRAYAVAYAVISLGDSFKNKI.

Mg(2+) contacts are provided by Asp8 and Glu58.

It belongs to the P-Pant transferase superfamily. AcpS family. Mg(2+) is required as a cofactor.

The protein localises to the cytoplasm. The enzyme catalyses apo-[ACP] + CoA = holo-[ACP] + adenosine 3',5'-bisphosphate + H(+). Functionally, transfers the 4'-phosphopantetheine moiety from coenzyme A to a Ser of acyl-carrier-protein. This Ruminiclostridium cellulolyticum (strain ATCC 35319 / DSM 5812 / JCM 6584 / H10) (Clostridium cellulolyticum) protein is Holo-[acyl-carrier-protein] synthase.